The sequence spans 30 residues: Thrombin-like enzyme LmrSP-2 (30 aa).

The protein belongs to the peptidase S1 family. Snake venom subfamily. In terms of tissue distribution, expressed by the venom gland.

The protein localises to the secreted. In terms of biological role, thrombin-like snake venom serine protease that cleaves alpha-chain of fibrinogen (FGA) releases only fibrinopeptide A. Shows coagulant, esterase and amidase activities. This Lachesis muta rhombeata (Bushmaster) protein is Thrombin-like enzyme LmrSP-2.